The chain runs to 679 residues: Methionine--tRNA ligase (679 aa).

Positions 15–25 (PYANGSIHLGH) match the 'HIGH' region motif. Residues Cys146, Cys149, Cys159, and Cys162 each coordinate Zn(2+). The short motif at 332–336 (KMSKS) is the 'KMSKS' region element. Lys335 is a binding site for ATP. A tRNA-binding domain is found at 577–679 (DFAKVDMRVA…AGALPGMPVK (103 aa)).

The protein belongs to the class-I aminoacyl-tRNA synthetase family. MetG type 1 subfamily. In terms of assembly, homodimer. Requires Zn(2+) as cofactor.

It localises to the cytoplasm. The catalysed reaction is tRNA(Met) + L-methionine + ATP = L-methionyl-tRNA(Met) + AMP + diphosphate. Is required not only for elongation of protein synthesis but also for the initiation of all mRNA translation through initiator tRNA(fMet) aminoacylation. The sequence is that of Methionine--tRNA ligase from Sodalis glossinidius (strain morsitans).